The following is a 303-amino-acid chain: tRNA dimethylallyltransferase (303 aa).

13–20 serves as a coordination point for ATP; it reads GPTASGKS. 15–20 contributes to the substrate binding site; it reads TASGKS. Interaction with substrate tRNA stretches follow at residues 38 to 41 and 162 to 166; these read DSMQ and QRLLR.

It belongs to the IPP transferase family. As to quaternary structure, monomer. Mg(2+) is required as a cofactor.

It carries out the reaction adenosine(37) in tRNA + dimethylallyl diphosphate = N(6)-dimethylallyladenosine(37) in tRNA + diphosphate. Functionally, catalyzes the transfer of a dimethylallyl group onto the adenine at position 37 in tRNAs that read codons beginning with uridine, leading to the formation of N6-(dimethylallyl)adenosine (i(6)A). The polypeptide is tRNA dimethylallyltransferase (Methylocella silvestris (strain DSM 15510 / CIP 108128 / LMG 27833 / NCIMB 13906 / BL2)).